The chain runs to 165 residues: Protein SprT (165 aa).

The SprT-like domain maps to 22–163 (LAQANLKLDR…RCVHCGEPLV (142 aa)). His78 provides a ligand contact to Zn(2+). Glu79 is a catalytic residue. His82 is a Zn(2+) binding site.

This sequence belongs to the SprT family. The cofactor is Zn(2+).

It localises to the cytoplasm. The sequence is that of Protein SprT from Salmonella agona (strain SL483).